The sequence spans 393 residues: NAD(P)H-quinone oxidoreductase subunit H, chloroplastic (393 aa).

Belongs to the complex I 49 kDa subunit family. In terms of assembly, NDH is composed of at least 16 different subunits, 5 of which are encoded in the nucleus.

The protein localises to the plastid. The protein resides in the chloroplast thylakoid membrane. The enzyme catalyses a plastoquinone + NADH + (n+1) H(+)(in) = a plastoquinol + NAD(+) + n H(+)(out). It catalyses the reaction a plastoquinone + NADPH + (n+1) H(+)(in) = a plastoquinol + NADP(+) + n H(+)(out). Its function is as follows. NDH shuttles electrons from NAD(P)H:plastoquinone, via FMN and iron-sulfur (Fe-S) centers, to quinones in the photosynthetic chain and possibly in a chloroplast respiratory chain. The immediate electron acceptor for the enzyme in this species is believed to be plastoquinone. Couples the redox reaction to proton translocation, and thus conserves the redox energy in a proton gradient. This chain is NAD(P)H-quinone oxidoreductase subunit H, chloroplastic, found in Jasminum nudiflorum (Winter jasmine).